A 248-amino-acid chain; its full sequence is 3-deoxy-manno-octulosonate cytidylyltransferase (248 aa).

It belongs to the KdsB family.

The protein resides in the cytoplasm. The enzyme catalyses 3-deoxy-alpha-D-manno-oct-2-ulosonate + CTP = CMP-3-deoxy-beta-D-manno-octulosonate + diphosphate. Its pathway is nucleotide-sugar biosynthesis; CMP-3-deoxy-D-manno-octulosonate biosynthesis; CMP-3-deoxy-D-manno-octulosonate from 3-deoxy-D-manno-octulosonate and CTP: step 1/1. It participates in bacterial outer membrane biogenesis; lipopolysaccharide biosynthesis. Activates KDO (a required 8-carbon sugar) for incorporation into bacterial lipopolysaccharide in Gram-negative bacteria. The polypeptide is 3-deoxy-manno-octulosonate cytidylyltransferase (Chlorobium chlorochromatii (strain CaD3)).